We begin with the raw amino-acid sequence, 113 residues long: Large ribosomal subunit protein uL22 (113 aa).

Belongs to the universal ribosomal protein uL22 family. Part of the 50S ribosomal subunit.

Functionally, this protein binds specifically to 23S rRNA; its binding is stimulated by other ribosomal proteins, e.g. L4, L17, and L20. It is important during the early stages of 50S assembly. It makes multiple contacts with different domains of the 23S rRNA in the assembled 50S subunit and ribosome. The globular domain of the protein is located near the polypeptide exit tunnel on the outside of the subunit, while an extended beta-hairpin is found that lines the wall of the exit tunnel in the center of the 70S ribosome. The protein is Large ribosomal subunit protein uL22 of Desulforamulus reducens (strain ATCC BAA-1160 / DSM 100696 / MI-1) (Desulfotomaculum reducens).